Here is a 353-residue protein sequence, read N- to C-terminus: Quinolinate synthase (353 aa).

2 residues coordinate iminosuccinate: His-47 and Ser-68. Cys-113 contributes to the [4Fe-4S] cluster binding site. Residues 139–141 and Ser-156 contribute to the iminosuccinate site; that span reads YAN. Cys-200 provides a ligand contact to [4Fe-4S] cluster. Residues 226-228 and Thr-243 each bind iminosuccinate; that span reads HPE. Cys-297 is a binding site for [4Fe-4S] cluster.

The protein belongs to the quinolinate synthase family. Type 1 subfamily. Requires [4Fe-4S] cluster as cofactor.

The protein localises to the cytoplasm. The enzyme catalyses iminosuccinate + dihydroxyacetone phosphate = quinolinate + phosphate + 2 H2O + H(+). It functions in the pathway cofactor biosynthesis; NAD(+) biosynthesis; quinolinate from iminoaspartate: step 1/1. Catalyzes the condensation of iminoaspartate with dihydroxyacetone phosphate to form quinolinate. The protein is Quinolinate synthase of Yersinia pestis bv. Antiqua (strain Nepal516).